A 385-amino-acid chain; its full sequence is Probable thioesterase PNKD (385 aa).

Residues 32-42 (KASQNRTRALQ) are compositionally biased toward polar residues. Residues 32-56 (KASQNRTRALQSHSSPECKEEPEPL) form a disordered region. Phosphoserine is present on valine 121. Positions 172, 174, 176, 177, 229, 253, and 291 each coordinate Zn(2+).

It belongs to the metallo-beta-lactamase superfamily. Glyoxalase II family. Isoform 2 interacts with the sarcomeric proteins, MRLC2, MYOM1 and ENO3. Zn(2+) serves as cofactor. Post-translationally, undergoes cleavage at the N-terminus. Expressed in many discrete areas of the brain.

The protein localises to the cell membrane. It localises to the mitochondrion. It is found in the cytoplasm. It carries out the reaction a thioester + H2O = a thiol + a carboxylate + H(+). Probable thioesterase that may play a role in cellular detoxification processes; it likely acts on a yet-unknown alpha-hydroxythioester substrate. In vitro, it is able to catalyze the hydrolysis of S-D-lactoyl-glutathione to form glutathione and D-lactic acid at very low rate, though this reaction is not physiologically relevant in vivo. This chain is Probable thioesterase PNKD (Pnkd), found in Mus musculus (Mouse).